We begin with the raw amino-acid sequence, 378 residues long: 4-hydroxy-3-methylbut-2-en-1-yl diphosphate synthase (flavodoxin) (378 aa).

[4Fe-4S] cluster is bound by residues cysteine 268, cysteine 271, cysteine 303, and glutamate 310. Residues 359-378 (AEREKEKEKEKEKEKETQEQ) form a disordered region.

Belongs to the IspG family. Requires [4Fe-4S] cluster as cofactor.

It carries out the reaction (2E)-4-hydroxy-3-methylbut-2-enyl diphosphate + oxidized [flavodoxin] + H2O + 2 H(+) = 2-C-methyl-D-erythritol 2,4-cyclic diphosphate + reduced [flavodoxin]. Its pathway is isoprenoid biosynthesis; isopentenyl diphosphate biosynthesis via DXP pathway; isopentenyl diphosphate from 1-deoxy-D-xylulose 5-phosphate: step 5/6. Functionally, converts 2C-methyl-D-erythritol 2,4-cyclodiphosphate (ME-2,4cPP) into 1-hydroxy-2-methyl-2-(E)-butenyl 4-diphosphate. The protein is 4-hydroxy-3-methylbut-2-en-1-yl diphosphate synthase (flavodoxin) of Bacillus cereus (strain ZK / E33L).